The sequence spans 101 residues: MIPGQYQIQPGEIELNAGRRTLRLNVSNSGDRPIQVGSHYHFFETNDALTFDRAASRGMRLNIAAGTAVRFEPGQTREVELVELAGKRRVFGFAGRIMGDL.

This sequence belongs to the urease beta subunit family. Heterotrimer of UreA (gamma), UreB (beta) and UreC (alpha) subunits. Three heterotrimers associate to form the active enzyme.

It is found in the cytoplasm. It carries out the reaction urea + 2 H2O + H(+) = hydrogencarbonate + 2 NH4(+). It functions in the pathway nitrogen metabolism; urea degradation; CO(2) and NH(3) from urea (urease route): step 1/1. The protein is Urease subunit beta of Pseudomonas fluorescens (strain ATCC BAA-477 / NRRL B-23932 / Pf-5).